A 452-amino-acid polypeptide reads, in one-letter code: MRFYNTLTRDVDEFKEMNSGRINMFVCGPTVQDHFHIGHARTYIFFDAVAKLLRNLGYSVFYLQNITDIDDKIINKAREMNIQPQDVADMYLREFLEDMSALKVTSVNYFAKSTLYINEIISQISRLIEKGYAYETSDGVYFEVSKFADYGQLSNQSLDQIIHGYRVAVNENKRNPEDFVLWKKRKPGEPYWDSPWGPGRPGWHIEDTAITETYFGPEYDIHGGGSDLIFPHHEAEIAQMRAISGRKYLSHYWIHTGMINVNNEKMSKSLKNFVTIREVLKEYRPEDLRYALLNANYRTQLDFSKGLLEESRKQVEYLNSTFRKLVNASGNSDLSADPSAVIKRMVDEATNDFDFRSVFRDLIDFAGDLNKNIESISRPAAQKAIDVFRWVDSFAGILLPETARLSGIIDDLLDLRKNLRTERKFQEADRIRDLLLKNGIHVEDRGDETIWW.

Cys27 serves as a coordination point for Zn(2+). Positions 29–39 (PTVQDHFHIGH) match the 'HIGH' region motif. Positions 207, 232, and 236 each coordinate Zn(2+). The 'KMSKS' region signature appears at 265 to 269 (KMSKS). An ATP-binding site is contributed by Lys268.

Belongs to the class-I aminoacyl-tRNA synthetase family. Zn(2+) serves as cofactor.

It is found in the cytoplasm. The catalysed reaction is tRNA(Cys) + L-cysteine + ATP = L-cysteinyl-tRNA(Cys) + AMP + diphosphate. In Thermoplasma acidophilum (strain ATCC 25905 / DSM 1728 / JCM 9062 / NBRC 15155 / AMRC-C165), this protein is Cysteine--tRNA ligase.